The primary structure comprises 218 residues: Ropporin-1-like protein (218 aa).

Positions 17–54 constitute an RIIa domain; it reads PALPNMLKQFTKAAIRTQPRDVLQWAADYFSALSKGQD. The tract at residues 199–218 is disordered; sequence QSQGGMVQPSNFTSLHTAEK.

The protein belongs to the ropporin family. In terms of assembly, component of axonemal radial spoke complexes.

The protein resides in the cell projection. It localises to the cilium. Its subcellular location is the flagellum. Functions as part of axonemal radial spoke complexes that play an important part in the motility of sperm and cilia. Important for male fertility. Involved in fibrous sheath integrity and sperm motility, plays a role in PKA-dependent signaling processes required for spermatozoa capacitation. The sequence is that of Ropporin-1-like protein (ropn1l) from Danio rerio (Zebrafish).